We begin with the raw amino-acid sequence, 255 residues long: Ribonuclease HII (255 aa).

The RNase H type-2 domain occupies 72–255 (AIICGIDEVG…KSFEPIKSLL (184 aa)). Positions 78, 79, and 170 each coordinate a divalent metal cation.

Belongs to the RNase HII family. Requires Mn(2+) as cofactor. Mg(2+) serves as cofactor.

The protein localises to the cytoplasm. It carries out the reaction Endonucleolytic cleavage to 5'-phosphomonoester.. Functionally, endonuclease that specifically degrades the RNA of RNA-DNA hybrids. In Staphylococcus aureus (strain Mu3 / ATCC 700698), this protein is Ribonuclease HII.